The sequence spans 496 residues: NADH-ubiquinone oxidoreductase 51 kDa subunit, mitochondrial (496 aa).

The transit peptide at Met-1–Phe-30 directs the protein to the mitochondrion. Position 98–107 (Gly-98–Gly-107) interacts with NAD(+). Gly-214–Thr-261 serves as a coordination point for FMN. [4Fe-4S] cluster is bound by residues Cys-393, Cys-396, Cys-399, and Cys-439.

This sequence belongs to the complex I 51 kDa subunit family. Complex I is composed of about 40 different subunits. This is a component of the flavoprotein-sulfur (FP) fragment of the enzyme. The cofactor is FMN. [4Fe-4S] cluster is required as a cofactor.

The protein resides in the mitochondrion inner membrane. It carries out the reaction a ubiquinone + NADH + 5 H(+)(in) = a ubiquinol + NAD(+) + 4 H(+)(out). Its function is as follows. Core subunit of the mitochondrial membrane respiratory chain NADH dehydrogenase (Complex I) that is believed to belong to the minimal assembly required for catalysis. Complex I functions in the transfer of electrons from NADH to the respiratory chain. The immediate electron acceptor for the enzyme is believed to be ubiquinone. This chain is NADH-ubiquinone oxidoreductase 51 kDa subunit, mitochondrial (NUO51), found in Aspergillus niger.